The following is a 710-amino-acid chain: MMFRDQVGMLSGWFKGWNECEQTVALLSLLKRVSRTQARFLQICLEHSLVDCTELHILEGEANNPAIINQWQQESKDKVISQLLTHLPLLKPGNIDAKMAYMKLLPKILAHSIEHNQHIEESRQLLSYALIHPATSLDDRSALAMWLNHLEDRTSGNFSTQSRCRSDSLDYGQMQYYHQRQNSDDKQNGWPNSRDSGICISSSGWQEKNTGCENGHLPLYSSSSVPSTINAIGTSTILSGQTHHSSLKRSVSLTPPMNVPNQPLGHGWMSHEDLRARGSQGIPSDHAPLSPQSSVASSGSGGSEHLEEQSTACNTFQDEGSGMKDVPAWLKSLRLHKYAALFSHITYDEMMSLNECHLEAQNVTKGARHKIVISIQKLKERHNLLKTLERDVLEGGNLRVPLQELHQIILTPIKACFPQNSNTEEHDQEADSQPPLLASKNQATESKDSASGGIQQHHIGNCESESGGVPLPESDLPGQFTRVMGKVCTQLLVSRPDEENISSYLQLIDKCLTHDAFTETQKKRLLSWKQQVQKLFRSFPRKSLLDVAGYRQQRKTSVDVLIGSRGFGQSNSLPTAGSVGSGIARRNPRQFQIPSRNLPSTRLSLLGASSLLGATQRASASNPAMLKQGRQNLWFANPGGSNSMPSRSHSSVQRTRSLPVHTSPQTMLMFQQQDFQVPVTEPDINNRLESLCLSMTEHALGDGVDRTSTI.

Disordered regions lie at residues 276–319 (ARGS…FQDE) and 441–476 (NQAT…ESDL). The span at 309–318 (QSTACNTFQD) shows a compositional bias: polar residues. Positions 319 to 379 (EGSGMKDVPA…KIVISIQKLK (61 aa)) constitute an SAM domain.

Belongs to the SMAUG family.

It is found in the cytoplasm. The protein localises to the cell projection. The protein resides in the dendrite. Its subcellular location is the synapse. It localises to the synaptosome. Its function is as follows. Acts as a translational repressor. This chain is Protein Smaug homolog 1 (samd4a), found in Xenopus laevis (African clawed frog).